The sequence spans 1902 residues: Rho GTPase-activating protein 21-B (1902 aa).

Disordered regions lie at residues 1-44 (MATR…EGFC), 78-97 (TSVK…RPRN), 284-317 (RTNR…NVPM), 348-369 (PAAH…GSHQ), 409-450 (NTTD…SQER), 581-603 (TRNF…RSGF), 613-632 (IPTP…DDGI), and 879-902 (KARE…DVFS). Residues 10–22 (EQQQEPSSPASEI) show a composition bias toward polar residues. Residues 77-162 (HTSVKDEENG…TLELSVMPKD (86 aa)) form the PDZ domain. A compositionally biased stretch (low complexity) spans 305 to 317 (TTSPSSSTPNVPM). Residues 409-424 (NTTDYNQMLPNRSSGQ) are compositionally biased toward polar residues. The PH domain occupies 903–1016 (DSNKEGFLYF…WIKAIQENGN (114 aa)). Residues 1039 to 1063 (TMMSSSSNKTEPSPKAQRQTLSIRQ) are compositionally biased toward polar residues. Residues 1039-1095 (TMMSSSSNKTEPSPKAQRQTLSIRQQFRAGKPDDDISPPKDKGSWRRIMKKPFEKKP) form a disordered region. The segment covering 1068 to 1082 (GKPDDDISPPKDKGS) has biased composition (basic and acidic residues). Residues 1103-1295 (VRLDDCPPAH…TLIQKHDWFF (193 aa)) enclose the Rho-GAP domain. Disordered regions lie at residues 1306–1357 (TVHE…GSGK), 1375–1394 (RKRK…DELD), 1494–1520 (MSDS…VSPE), 1559–1704 (VQSV…EPAW), 1729–1748 (QKAN…RHTL), and 1803–1890 (TSTS…KLSG). The segment covering 1339 to 1357 (SDSATSDSAKSKGSWGSGK) has biased composition (low complexity). Residues 1494–1511 (MSDSGTMLSTSSQASVQG) show a composition bias toward polar residues. 2 stretches are compositionally biased toward basic and acidic residues: residues 1575–1585 (SELVSEGRPME) and 1601–1613 (FDRR…EEPS). Residues 1614–1630 (RNVQVNSEGSPSCTEGS) show a composition bias toward polar residues. 2 stretches are compositionally biased toward basic and acidic residues: residues 1634–1652 (KMDR…DTLS) and 1661–1673 (TDSD…KTEE). Basic residues predominate over residues 1737–1748 (RKKKNIRRRHTL). Residues 1865 to 1878 (NGDSFQSKNKNNFS) show a composition bias toward polar residues.

The protein localises to the golgi apparatus membrane. The protein resides in the cell junction. It localises to the cytoplasmic vesicle membrane. It is found in the cytoplasm. Its subcellular location is the cytoskeleton. Its function is as follows. GTPase-activating protein (GAP) for rhoa and cdc42. In Xenopus laevis (African clawed frog), this protein is Rho GTPase-activating protein 21-B (arhgap21-b).